We begin with the raw amino-acid sequence, 318 residues long: Trans-prenyltransferase (318 aa).

Residues 1 to 21 (MLHLIYISIIVVLIIILISYT) form a helical membrane-spanning segment. The isopentenyl diphosphate site is built by Lys-85, Arg-88, and His-122. Mg(2+)-binding residues include Asp-129 and Asp-135. Arg-140 contacts dimethylallyl diphosphate. Residue Arg-141 coordinates isopentenyl diphosphate. Residues Lys-216, Thr-217, and Gln-254 each coordinate dimethylallyl diphosphate.

It belongs to the FPP/GGPP synthase family. Asfivirus trans-prenyltransferase subfamily. Mg(2+) serves as cofactor.

It is found in the host endoplasmic reticulum. The protein resides in the host membrane. The enzyme catalyses isopentenyl diphosphate + dimethylallyl diphosphate = (2E)-geranyl diphosphate + diphosphate. It catalyses the reaction isopentenyl diphosphate + (2E)-geranyl diphosphate = (2E,6E)-farnesyl diphosphate + diphosphate. It carries out the reaction isopentenyl diphosphate + (2E,6E)-farnesyl diphosphate = (2E,6E,10E)-geranylgeranyl diphosphate + diphosphate. The catalysed reaction is isopentenyl diphosphate + (2E,6E,10E)-geranylgeranyl diphosphate = (2E,6E,10E,14E)-geranylfarnesyl diphosphate + diphosphate. Its pathway is isoprenoid biosynthesis; farnesyl diphosphate biosynthesis; farnesyl diphosphate from geranyl diphosphate and isopentenyl diphosphate: step 1/1. It functions in the pathway isoprenoid biosynthesis; geranyl diphosphate biosynthesis; geranyl diphosphate from dimethylallyl diphosphate and isopentenyl diphosphate: step 1/1. The protein operates within isoprenoid biosynthesis; geranylgeranyl diphosphate biosynthesis; geranylgeranyl diphosphate from farnesyl diphosphate and isopentenyl diphosphate: step 1/1. Its function is as follows. Trans-prenyltransferase that catalyzes the sequential condensation of isopentenyl diphosphate (IPP) with different allylic diphosphates, such as dimethylallyl diphosphate (DMAPP), geranyl diphosphate (GPP), farnesyl diphosphate (FPP) and geranylgeranyl diphosphate (GGPP), farnesyl diphosphate being the best allylic substrate. This is Trans-prenyltransferase from African swine fever virus (strain Badajoz 1971 Vero-adapted) (Ba71V).